Consider the following 391-residue polypeptide: uncharacterized protein (391 aa).

A helical transmembrane segment spans residues 4–24; sequence FALIVGIVALAIFSFLYIQLY.

The protein resides in the membrane. This is an uncharacterized protein from Haemophilus influenzae (strain ATCC 51907 / DSM 11121 / KW20 / Rd).